The sequence spans 323 residues: tRNA dimethylallyltransferase (323 aa).

27–34 (GPTGSGKT) contacts ATP. 29–34 (TGSGKT) provides a ligand contact to substrate. Interaction with substrate tRNA stretches follow at residues 52–55 (DSRQ) and 176–180 (QRIVR).

Belongs to the IPP transferase family. As to quaternary structure, monomer. Mg(2+) serves as cofactor.

The enzyme catalyses adenosine(37) in tRNA + dimethylallyl diphosphate = N(6)-dimethylallyladenosine(37) in tRNA + diphosphate. Catalyzes the transfer of a dimethylallyl group onto the adenine at position 37 in tRNAs that read codons beginning with uridine, leading to the formation of N6-(dimethylallyl)adenosine (i(6)A). The polypeptide is tRNA dimethylallyltransferase (Desulfovibrio desulfuricans (strain ATCC 27774 / DSM 6949 / MB)).